Consider the following 194-residue polypeptide: Imidazoleglycerol-phosphate dehydratase (194 aa).

Belongs to the imidazoleglycerol-phosphate dehydratase family.

It localises to the cytoplasm. The enzyme catalyses D-erythro-1-(imidazol-4-yl)glycerol 3-phosphate = 3-(imidazol-4-yl)-2-oxopropyl phosphate + H2O. The protein operates within amino-acid biosynthesis; L-histidine biosynthesis; L-histidine from 5-phospho-alpha-D-ribose 1-diphosphate: step 6/9. This chain is Imidazoleglycerol-phosphate dehydratase, found in Bacillus cereus (strain AH187).